The chain runs to 444 residues: Methylenetetrahydrofolate--tRNA-(uracil-5-)-methyltransferase TrmFO (444 aa).

G10 to G15 provides a ligand contact to FAD.

This sequence belongs to the MnmG family. TrmFO subfamily. Requires FAD as cofactor.

The protein localises to the cytoplasm. The catalysed reaction is uridine(54) in tRNA + (6R)-5,10-methylene-5,6,7,8-tetrahydrofolate + NADH + H(+) = 5-methyluridine(54) in tRNA + (6S)-5,6,7,8-tetrahydrofolate + NAD(+). The enzyme catalyses uridine(54) in tRNA + (6R)-5,10-methylene-5,6,7,8-tetrahydrofolate + NADPH + H(+) = 5-methyluridine(54) in tRNA + (6S)-5,6,7,8-tetrahydrofolate + NADP(+). In terms of biological role, catalyzes the folate-dependent formation of 5-methyl-uridine at position 54 (M-5-U54) in all tRNAs. This Streptococcus sanguinis (strain SK36) protein is Methylenetetrahydrofolate--tRNA-(uracil-5-)-methyltransferase TrmFO.